The primary structure comprises 414 residues: CCA-adding enzyme (414 aa).

G8 and R11 together coordinate ATP. CTP-binding residues include G8 and R11. Positions 21 and 23 each coordinate Mg(2+). The ATP site is built by R91, R137, and R140. CTP is bound by residues R91, R137, and R140.

Belongs to the tRNA nucleotidyltransferase/poly(A) polymerase family. Bacterial CCA-adding enzyme type 2 subfamily. The cofactor is Mg(2+).

The catalysed reaction is a tRNA precursor + 2 CTP + ATP = a tRNA with a 3' CCA end + 3 diphosphate. It catalyses the reaction a tRNA with a 3' CCA end + 2 CTP + ATP = a tRNA with a 3' CCACCA end + 3 diphosphate. Its function is as follows. Catalyzes the addition and repair of the essential 3'-terminal CCA sequence in tRNAs without using a nucleic acid template. Adds these three nucleotides in the order of C, C, and A to the tRNA nucleotide-73, using CTP and ATP as substrates and producing inorganic pyrophosphate. tRNA 3'-terminal CCA addition is required both for tRNA processing and repair. Also involved in tRNA surveillance by mediating tandem CCA addition to generate a CCACCA at the 3' terminus of unstable tRNAs. While stable tRNAs receive only 3'-terminal CCA, unstable tRNAs are marked with CCACCA and rapidly degraded. The chain is CCA-adding enzyme from Buchnera aphidicola subsp. Acyrthosiphon pisum (strain 5A).